We begin with the raw amino-acid sequence, 880 residues long: Alanine--tRNA ligase (880 aa).

Zn(2+) is bound by residues His-563, His-567, Cys-665, and His-669.

It belongs to the class-II aminoacyl-tRNA synthetase family. Requires Zn(2+) as cofactor.

It is found in the cytoplasm. It carries out the reaction tRNA(Ala) + L-alanine + ATP = L-alanyl-tRNA(Ala) + AMP + diphosphate. Its function is as follows. Catalyzes the attachment of alanine to tRNA(Ala) in a two-step reaction: alanine is first activated by ATP to form Ala-AMP and then transferred to the acceptor end of tRNA(Ala). Also edits incorrectly charged Ser-tRNA(Ala) and Gly-tRNA(Ala) via its editing domain. The sequence is that of Alanine--tRNA ligase from Desulforudis audaxviator (strain MP104C).